A 187-amino-acid chain; its full sequence is Glutathione-dependent formaldehyde-activating enzyme (187 aa).

Residues 20 to 167 (FAGGTLVCKC…LKELGLEPYD (148 aa)) form the CENP-V/GFA domain. Cysteine 27, cysteine 29, cysteine 48, cysteine 50, cysteine 53, cysteine 95, and cysteine 98 together coordinate Zn(2+).

Belongs to the Gfa family. Requires Zn(2+) as cofactor.

It catalyses the reaction S-(hydroxymethyl)glutathione = glutathione + formaldehyde. The protein operates within one-carbon metabolism; formaldehyde degradation; formate from formaldehyde (glutathione route): step 1/3. Catalyzes the condensation of formaldehyde and glutathione to S-hydroxymethylglutathione. This chain is Glutathione-dependent formaldehyde-activating enzyme, found in Bradyrhizobium sp. (strain BTAi1 / ATCC BAA-1182).